The following is a 244-amino-acid chain: CTD nuclear envelope phosphatase 1 (244 aa).

The helical transmembrane segment at 7 to 29 (LLGLRTFVAFAAKLWSFFIYLLR) threads the bilayer. An FCP1 homology domain is found at 57-224 (AQVKRKILVL…LNLLPMLDAL (168 aa)).

Belongs to the dullard family. As to quaternary structure, (Microbial infection) Interacts with Chandipura virus matrix protein. In terms of assembly, interacts with CNEP1R1; the complex dephosphorylates LPIN1 and LPIN2. As to expression, muscle specific with lower expression in other metabolic tissues.

Its subcellular location is the endoplasmic reticulum membrane. The protein localises to the nucleus membrane. The enzyme catalyses O-phospho-L-seryl-[protein] + H2O = L-seryl-[protein] + phosphate. The catalysed reaction is O-phospho-L-threonyl-[protein] + H2O = L-threonyl-[protein] + phosphate. Serine/threonine protein phosphatase forming with CNEP1R1 an active phosphatase complex that dephosphorylates and may activate LPIN1 and LPIN2. LPIN1 and LPIN2 are phosphatidate phosphatases that catalyze the conversion of phosphatidic acid to diacylglycerol and control the metabolism of fatty acids at different levels. May indirectly modulate the lipid composition of nuclear and/or endoplasmic reticulum membranes and be required for proper nuclear membrane morphology and/or dynamics. May also indirectly regulate the production of lipid droplets and triacylglycerol. May antagonize BMP signaling. The sequence is that of CTD nuclear envelope phosphatase 1 (CTDNEP1) from Homo sapiens (Human).